The sequence spans 321 residues: MKPLNVIFAGTPDFAARHLQALIDSEHNVIAVYTQPDRPAGRGKKLQASPVKALALENDIAVFQPKSLRDEDAQAELAALNADIMVVVAYGLILPKVVLDTPRLGCINVHGSILPRWRGAAPIQRALWAGDTETGVTIMQMDIGLDTGDMLLKTLLPIEDNDTSSTLYEKLAEQGPTALVEALAGIAEGTLPAEKQDESLANYAEKLSKEEARLDWSKPASALWREIRAFNPWPVSHYEHEGNTIKVWQSSVSDETSSQQPGTILSADKSGISIATGEGVLTITQMQLPGKKPLSVADILNSRADWFTPGTVLASTDNQEA.

112-115 (SILP) provides a ligand contact to (6S)-5,6,7,8-tetrahydrofolate.

Belongs to the Fmt family.

It carries out the reaction L-methionyl-tRNA(fMet) + (6R)-10-formyltetrahydrofolate = N-formyl-L-methionyl-tRNA(fMet) + (6S)-5,6,7,8-tetrahydrofolate + H(+). Its function is as follows. Attaches a formyl group to the free amino group of methionyl-tRNA(fMet). The formyl group appears to play a dual role in the initiator identity of N-formylmethionyl-tRNA by promoting its recognition by IF2 and preventing the misappropriation of this tRNA by the elongation apparatus. The protein is Methionyl-tRNA formyltransferase of Shewanella pealeana (strain ATCC 700345 / ANG-SQ1).